The following is a 249-amino-acid chain: Putative TrmH family tRNA/rRNA methyltransferase YacO (249 aa).

The S-adenosyl-L-methionine site is built by G198, L218, and L227.

It belongs to the class IV-like SAM-binding methyltransferase superfamily. RNA methyltransferase TrmH family.

The protein is Putative TrmH family tRNA/rRNA methyltransferase YacO (yacO) of Bacillus subtilis (strain 168).